The primary structure comprises 183 residues: Oligoribonuclease (183 aa).

Residues 8-171 form the Exonuclease domain; sequence LIWIDLEMTG…DDIRDSIHEL (164 aa). Tyr-129 is an active-site residue.

The protein belongs to the oligoribonuclease family.

The protein localises to the cytoplasm. 3'-to-5' exoribonuclease specific for small oligoribonucleotides. This is Oligoribonuclease from Halorhodospira halophila (strain DSM 244 / SL1) (Ectothiorhodospira halophila (strain DSM 244 / SL1)).